The sequence spans 478 residues: MAMDSKKEIRLKRELGYFWGTNFLIINIIGAGIFVSPKGVLQHSSMNVGVSLCVWAVCAVLTLTSALCSAEIGITFPYSGAHYYFLKRCFGPLVAFLRLWTSLFLGPGLIASQALLLAEYGVQPFYPSCSAPILPRKCLALAMLWIVGILNSRGVKELSWLQTVSSVLKVGILGVISLSGLFLLVRGKKENVQRLQNAFDAEFPEVSQLIEAIFQGYFAFSGGGCFTCIAGELKKPSKTIPRCIFTGLPLVTVVYLLANISYLTVLTPQEMLSSDAVALTWTDRVIPQFTWTVPFAISASLFINLVINVLETSRVLYIASENGQLPLLFCALNVHSSPFIAVLLIISMASILIVLTNLIDLINYLYFVVSIWTALSIIGILKLRYQEPNLHRPYKVFLPFTFIALGITLSLVLIPLVKSPKLHYIYVFLFLLSGLVFYVPLIHFKVKFVWFQKLTCYLQLLFNICIPDVSDDHIHEES.

Residues 1–14 (MAMDSKKEIRLKRE) are Cytoplasmic-facing. The helical transmembrane segment at 15-35 (LGYFWGTNFLIINIIGAGIFV) threads the bilayer. Residues 36-47 (SPKGVLQHSSMN) lie on the Extracellular side of the membrane. The chain crosses the membrane as a helical span at residues 48-68 (VGVSLCVWAVCAVLTLTSALC). Topologically, residues 69 to 89 (SAEIGITFPYSGAHYYFLKRC) are cytoplasmic. A helical transmembrane segment spans residues 90–110 (FGPLVAFLRLWTSLFLGPGLI). Residues 111–129 (ASQALLLAEYGVQPFYPSC) lie on the Extracellular side of the membrane. The helical transmembrane segment at 130 to 150 (SAPILPRKCLALAMLWIVGIL) threads the bilayer. The Cytoplasmic portion of the chain corresponds to 151-163 (NSRGVKELSWLQT). A helical membrane pass occupies residues 164–184 (VSSVLKVGILGVISLSGLFLL). Topologically, residues 185-208 (VRGKKENVQRLQNAFDAEFPEVSQ) are extracellular. The helical transmembrane segment at 209–229 (LIEAIFQGYFAFSGGGCFTCI) threads the bilayer. Residues 230-242 (AGELKKPSKTIPR) are Cytoplasmic-facing. A helical transmembrane segment spans residues 243–263 (CIFTGLPLVTVVYLLANISYL). Residues 264–288 (TVLTPQEMLSSDAVALTWTDRVIPQ) lie on the Extracellular side of the membrane. A helical membrane pass occupies residues 289–309 (FTWTVPFAISASLFINLVINV). Residues 310 to 338 (LETSRVLYIASENGQLPLLFCALNVHSSP) lie on the Cytoplasmic side of the membrane. Residues 339 to 359 (FIAVLLIISMASILIVLTNLI) traverse the membrane as a helical segment. Position 360 (Asp360) is a topological domain, extracellular. The chain crosses the membrane as a helical span at residues 361–381 (LINYLYFVVSIWTALSIIGIL). The Cytoplasmic segment spans residues 382 to 395 (KLRYQEPNLHRPYK). A helical membrane pass occupies residues 396–416 (VFLPFTFIALGITLSLVLIPL). The Extracellular portion of the chain corresponds to 417–423 (VKSPKLH). Residues 424 to 444 (YIYVFLFLLSGLVFYVPLIHF) form a helical membrane-spanning segment. Residues 445–478 (KVKFVWFQKLTCYLQLLFNICIPDVSDDHIHEES) are Cytoplasmic-facing.

Belongs to the amino acid-polyamine-organocation (APC) superfamily. In terms of assembly, disulfide-linked heterodimer composed of the catalytic light subunit SLC7A13 and the heavy subunit SLC3A1. As to expression, expressed in renal tubules in the outer stripe of the outer medulla and medullary ray (at protein level). Detected in male but not in female kidney.

Its subcellular location is the apical cell membrane. The enzyme catalyses L-cystine(out) + L-aspartate(in) = L-cystine(in) + L-aspartate(out). It carries out the reaction L-cystine(out) = L-cystine(in). It catalyses the reaction L-aspartate(in) + L-glutamate(out) = L-aspartate(out) + L-glutamate(in). The catalysed reaction is L-aspartate(in) + L-glutamine(out) = L-aspartate(out) + L-glutamine(in). The enzyme catalyses L-aspartate(in) + L-methionine(out) = L-aspartate(out) + L-methionine(in). It carries out the reaction L-leucine(out) + L-aspartate(in) = L-leucine(in) + L-aspartate(out). It catalyses the reaction L-valine(out) + L-aspartate(in) = L-valine(in) + L-aspartate(out). The catalysed reaction is L-aspartate(in) + L-phenylalanine(out) = L-aspartate(out) + L-phenylalanine(in). The enzyme catalyses L-tyrosine(out) + L-aspartate(in) = L-tyrosine(in) + L-aspartate(out). It carries out the reaction L-tryptophan(out) + L-aspartate(in) = L-tryptophan(in) + L-aspartate(out). Functionally, associates with SLC3A1/rBAT to form a functional heterodimeric complex that transports anionic and neutral amino acids across the apical plasma membrane of renal epithelium. Preferentially mediates exchange transport, but can also operate via facilitated diffusion. May act as a major transporter for L-cystine in late proximal tubules, ensuring its reabsorption from the luminal fluid in exchange for cytosolic L-glutamate or L-aspartate. This is Solute carrier family 7 member 13 from Mus musculus (Mouse).